The following is a 1399-amino-acid chain: DNA-directed RNA polymerase subunit beta' (1399 aa).

Zn(2+) contacts are provided by Cys-70, Cys-72, Cys-85, and Cys-88. Asp-460, Asp-462, and Asp-464 together coordinate Mg(2+). 4 residues coordinate Zn(2+): Cys-814, Cys-888, Cys-895, and Cys-898.

The protein belongs to the RNA polymerase beta' chain family. The RNAP catalytic core consists of 2 alpha, 1 beta, 1 beta' and 1 omega subunit. When a sigma factor is associated with the core the holoenzyme is formed, which can initiate transcription. Requires Mg(2+) as cofactor. It depends on Zn(2+) as a cofactor.

The enzyme catalyses RNA(n) + a ribonucleoside 5'-triphosphate = RNA(n+1) + diphosphate. DNA-dependent RNA polymerase catalyzes the transcription of DNA into RNA using the four ribonucleoside triphosphates as substrates. This is DNA-directed RNA polymerase subunit beta' from Pseudomonas savastanoi pv. phaseolicola (strain 1448A / Race 6) (Pseudomonas syringae pv. phaseolicola (strain 1448A / Race 6)).